The primary structure comprises 175 residues: NADH-ubiquinone oxidoreductase chain 6 (175 aa).

The next 5 helical transmembrane spans lie at 1–21, 25–45, 47–67, 88–108, and 149–169; these read MMTYIVFILSTVFVVSFVSFS, SPIYGGFGLIVAGGTGCGIVL, FGGSFLGLMVFLIYLGGMLVV, AVLAMFITGVLAELLTACYIL, and YGTWLVVVTGWSLLIGVLVIM.

This sequence belongs to the complex I subunit 6 family. In terms of assembly, core subunit of respiratory chain NADH dehydrogenase (Complex I) which is composed of 45 different subunits.

The protein resides in the mitochondrion inner membrane. The catalysed reaction is a ubiquinone + NADH + 5 H(+)(in) = a ubiquinol + NAD(+) + 4 H(+)(out). Functionally, core subunit of the mitochondrial membrane respiratory chain NADH dehydrogenase (Complex I) which catalyzes electron transfer from NADH through the respiratory chain, using ubiquinone as an electron acceptor. Essential for the catalytic activity and assembly of complex I. The sequence is that of NADH-ubiquinone oxidoreductase chain 6 (MT-ND6) from Felis catus (Cat).